The following is a 220-amino-acid chain: Probable septum site-determining protein MinC (220 aa).

The protein belongs to the MinC family. As to quaternary structure, interacts with MinD and FtsZ.

Cell division inhibitor that blocks the formation of polar Z ring septums. Rapidly oscillates between the poles of the cell to destabilize FtsZ filaments that have formed before they mature into polar Z rings. Prevents FtsZ polymerization. The chain is Probable septum site-determining protein MinC from Vibrio atlanticus (strain LGP32) (Vibrio splendidus (strain Mel32)).